Here is a 310-residue protein sequence, read N- to C-terminus: Tetrahydromethanopterin S-methyltransferase subunit H (310 aa).

Belongs to the MtrH family. The complex is composed of 8 subunits; MtrA, MtrB, MtrC, MtrD, MtrE, MtrF, MtrG and MtrH.

It catalyses the reaction 5-methyl-5,6,7,8-tetrahydromethanopterin + coenzyme M + 2 Na(+)(in) = 5,6,7,8-tetrahydromethanopterin + methyl-coenzyme M + 2 Na(+)(out). Its pathway is one-carbon metabolism; methanogenesis from CO(2); methyl-coenzyme M from 5,10-methylene-5,6,7,8-tetrahydromethanopterin: step 2/2. Part of a complex that catalyzes the formation of methyl-coenzyme M and tetrahydromethanopterin from coenzyme M and methyl-tetrahydromethanopterin. This is an energy-conserving, sodium-ion translocating step. MtrH catalyzes the transfer of the methyl group from methyl-tetrahydromethanopterin to the corrinoid prosthetic group of MtrA. The protein is Tetrahydromethanopterin S-methyltransferase subunit H of Methanothermobacter thermautotrophicus (strain ATCC 29096 / DSM 1053 / JCM 10044 / NBRC 100330 / Delta H) (Methanobacterium thermoautotrophicum).